A 533-amino-acid chain; its full sequence is MMPVRTYHHHHHHNNSNNHRLRRIIPRVLLAVFAIYAVSFAAYLLRHQSPHPHPHPAADPERDAVDAAGGGGGGGAVDRVRVEAPSSQKPWPRLPSFLPWTSASVRPPPKHSCEGYFGNGFSRLVDVLPARGGGGGGWFRCHHSETLRSSICEGGRVRLDPGLIAMSRGGEPLDQVMGRAEEEELPKYEPGALQVEAAAKRTGPLVEAGFLDAYVPTGGIGMHTMRSLLDSGRVVPPGELHCSQWVEEPTLLVTRFEYANLFHTITDWYSAYVSSRVTDLPNRPNVVFVDGHCKAQLEQTWEALFSNVTYVKNFSGPVCFRHAILSPLGYETALFKGLSESFSCEGASAESLREKPDHQKTARLSEFGEMILASFDLLRDDILSSKTSNGLNVLFVRREDYLAHPRHSGKVESRLSNEKEVYDAIEGWAKGQKCKINVINGLFAHMNMKEQLRAIQEASVVIGAHGAGLTHLVSATPDTKVLEIISSMYRRPHFALISHWKSLEYHAINLPGSYARVTDVINELSNILKGFGC.

Residues 1–23 (MMPVRTYHHHHHHNNSNNHRLRR) lie on the Cytoplasmic side of the membrane. The chain crosses the membrane as a helical; Signal-anchor for type II membrane protein span at residues 24 to 44 (IIPRVLLAVFAIYAVSFAAYL). Over 45 to 533 (LRHQSPHPHP…LSNILKGFGC (489 aa)) the chain is Lumenal. A disordered region spans residues 51-78 (HPHPHPAADPERDAVDAAGGGGGGGAVD). Residues 56–65 (PAADPERDAV) are compositionally biased toward basic and acidic residues. N-linked (GlcNAc...) asparagine glycans are attached at residues N307 and N313.

Belongs to the glycosyltransferase 61 family. Expressed at the base of the crown roots and in the basal region of the shoot, which contains the shoot and axillary meristems.

It is found in the golgi apparatus membrane. The protein operates within glycan metabolism. Functionally, glycosyltransferase involved in the xylosylation of N-glycans. Possesses beta-1,2-xylosyltransferase activity, transferring xylose from UDP-xylose to the core beta-linked mannose of N-glycans. Beta-1,2-linked xylose residues on N-glycans are critical for seed germination and plant development and growth under conditions of abiotic stress. This chain is Beta-1,2-xylosyltransferase RCN11, found in Oryza sativa subsp. japonica (Rice).